The sequence spans 674 residues: DNA ligase (674 aa).

NAD(+) contacts are provided by residues 35 to 39 (DFEFD), 84 to 85 (SL), and Glu118. The active-site N6-AMP-lysine intermediate is the Lys120. Residues Arg141, Glu184, Lys297, and Lys321 each contribute to the NAD(+) site. Zn(2+) is bound by residues Cys415, Cys418, Cys433, and Cys439. Positions 598–674 (QVNRNFEGVT…VSEDEFEAML (77 aa)) constitute a BRCT domain.

Belongs to the NAD-dependent DNA ligase family. LigA subfamily. The cofactor is Mg(2+). Mn(2+) is required as a cofactor.

It carries out the reaction NAD(+) + (deoxyribonucleotide)n-3'-hydroxyl + 5'-phospho-(deoxyribonucleotide)m = (deoxyribonucleotide)n+m + AMP + beta-nicotinamide D-nucleotide.. DNA ligase that catalyzes the formation of phosphodiester linkages between 5'-phosphoryl and 3'-hydroxyl groups in double-stranded DNA using NAD as a coenzyme and as the energy source for the reaction. It is essential for DNA replication and repair of damaged DNA. In Pelodictyon phaeoclathratiforme (strain DSM 5477 / BU-1), this protein is DNA ligase.